Reading from the N-terminus, the 924-residue chain is MSRSRQPPLVTGISPNEGIPWTKVTIRGENLGTGPTDLIGLTICGHNCLLTAEWMSASKIVCRVGQAKNDKGDIIVTTKSGGKGTSTVSFKLLKPEKIGILDQSAVWVDEMNYYDMRTDRNKGIPPLSLRPANPLGIEIEKCKLPQKNLEVLFHGMSADFTSENFSAAWYLIENHSTTSFEQLKMAVTNLKRQANKKSEGSLAYVKGGLSTFFEAQDALSAIHQKLEADGTEKVEGSMTQKLENVLNRASNTADTLFQEVLGRKDKADSTRNALNVLQRFKFLFNLPLNIKRNIQKGDYDVVINDYEKAKSLFGKTEVQVFKKYYAEVEAGIEDLRELLLKKLLETPSTLHDQKRYIRYLSDLHAPGDPAWQCIGAQHKWTLKLMQDCKEGHMKSLKGHPGPHSPMLDLDNDVRPSVLGHLSQTASLKRGSSFQSGRDDTWRYKTPHRVAFVEKLTKLVLSQLPNFWKLWISYVNGSLFSETAEKSGQSERSKNVRQRQNDFKKMIQEVMHSLVKLIRGALLPLSLREGDGRQYGGWEVQAELSGQWLAHVIQTIRLTYESLTALEIPNDMLQIIQDLILDLRIRCIMVTLQHTAEEIKRLAEKEDWVVDNEGLTSLPCQFEQSIVHSLQSLKGVVDCKPGEASVFQQPKTQEEVCQLCINIMQVFIYCLEQLSTKPDADIDTTHLSVDVSSPDLFGSIHEDFSLTSEQRLLIVLSNCCYLERHTFLNIAEHFEKHNFQGIEKITQVSMASLKELDQRLFENYIELKADPIVGSLEPGIYAGYFDWKDCLPPAGVRNYLKEALVNIIAVHAEVFTISKELVPRVLARVVEAVSEELSRLMQCVSSFSRNGALQARLEICALRDTVAIYLTSESRSSFKQALEALPQLASGADKKSLEELLNKFKSSMHLQLTCFQAASPAVMKT.

Residues 8–93 (PLVTGISPNE…GTSTVSFKLL (86 aa)) form the IPT/TIG domain. The stretch at 240–260 (QKLENVLNRASNTADTLFQEV) forms a coiled coil. A phosphoserine mark is found at serine 431, serine 432, and serine 435. Residue threonine 440 is modified to Phosphothreonine. Residue lysine 454 is modified to N6-acetyllysine.

Belongs to the SEC5 family. In terms of assembly, the exocyst complex is composed of EXOC1, EXOC2, EXOC3, EXOC4, EXOC5, EXOC6, EXOC7 and EXOC8. Interacts with EXOC3L1. Interacts with GNEFR/DELGEF; this interaction occurs only in the presence of magnesium or manganese and is stimulated by dCTP or GTP. Interacts with RALA and RALB. Interacts with ARL13B; regulates ARL13B localization to the cilium membrane.

It is found in the midbody. Its subcellular location is the midbody ring. Its function is as follows. Component of the exocyst complex involved in the docking of exocytic vesicles with fusion sites on the plasma membrane. The protein is Exocyst complex component 2 (Exoc2) of Mus musculus (Mouse).